The primary structure comprises 391 residues: 1-deoxy-D-xylulose 5-phosphate reductoisomerase (391 aa).

Positions 10, 11, 12, 13, 38, and 122 each coordinate NADPH. Lys123 provides a ligand contact to 1-deoxy-D-xylulose 5-phosphate. Glu124 serves as a coordination point for NADPH. Asp148 is a Mn(2+) binding site. Residues Ser149, Glu150, Ser173, and His196 each contribute to the 1-deoxy-D-xylulose 5-phosphate site. Residue Glu150 participates in Mn(2+) binding. Gly202 provides a ligand contact to NADPH. The 1-deoxy-D-xylulose 5-phosphate site is built by Ser209, Asn214, Lys215, and Glu218. A Mn(2+)-binding site is contributed by Glu218.

It belongs to the DXR family. The cofactor is Mg(2+). Mn(2+) serves as cofactor.

The enzyme catalyses 2-C-methyl-D-erythritol 4-phosphate + NADP(+) = 1-deoxy-D-xylulose 5-phosphate + NADPH + H(+). It functions in the pathway isoprenoid biosynthesis; isopentenyl diphosphate biosynthesis via DXP pathway; isopentenyl diphosphate from 1-deoxy-D-xylulose 5-phosphate: step 1/6. Functionally, catalyzes the NADPH-dependent rearrangement and reduction of 1-deoxy-D-xylulose-5-phosphate (DXP) to 2-C-methyl-D-erythritol 4-phosphate (MEP). The polypeptide is 1-deoxy-D-xylulose 5-phosphate reductoisomerase (Wolbachia pipientis subsp. Culex pipiens (strain wPip)).